A 681-amino-acid polypeptide reads, in one-letter code: PTS system glucose-specific EIICBA component (681 aa).

The PTS EIIC type-1 domain occupies 3 to 414; sequence KKLFGQLQRI…LKYKTPGRED (412 aa). 10 helical membrane passes run 16-36, 73-93, 126-146, 170-190, 199-219, 273-293, 303-323, 328-348, 355-375, and 383-403; these read LMLP…GTAM, MIFA…AAIA, ILGI…GALA, FVPI…ALIW, AFST…FGFI, FMQG…LAIY, VVAG…ITEP, FLFV…LSFL, LHLG…GILP, and VIPV…FLIV. The PTS EIIB type-1 domain maps to 425–506; the sequence is TELPYAVLEA…QQIMNGQVVE (82 aa). C447 (phosphocysteine intermediate; for EIIB activity) is an active-site residue. Residues 551-655 form the PTS EIIA type-1 domain; the sequence is DQVFSEKMMG…SDITPIIVTQ (105 aa). H603 serves as the catalytic Tele-phosphohistidine intermediate; for EIIA activity.

The protein resides in the cell membrane. The catalysed reaction is N(pros)-phospho-L-histidyl-[protein] + D-glucose(out) = D-glucose 6-phosphate(in) + L-histidyl-[protein]. Functionally, the phosphoenolpyruvate-dependent sugar phosphotransferase system (sugar PTS), a major carbohydrate active transport system, catalyzes the phosphorylation of incoming sugar substrates concomitantly with their translocation across the cell membrane. This system is involved in glucose transport. This is PTS system glucose-specific EIICBA component (ptsG) from Staphylococcus aureus (strain NCTC 8325 / PS 47).